Consider the following 88-residue polypeptide: Small ribosomal subunit protein uS15 (88 aa).

This sequence belongs to the universal ribosomal protein uS15 family. Part of the 30S ribosomal subunit. Forms a bridge to the 50S subunit in the 70S ribosome, contacting the 23S rRNA.

Functionally, one of the primary rRNA binding proteins, it binds directly to 16S rRNA where it helps nucleate assembly of the platform of the 30S subunit by binding and bridging several RNA helices of the 16S rRNA. In terms of biological role, forms an intersubunit bridge (bridge B4) with the 23S rRNA of the 50S subunit in the ribosome. This chain is Small ribosomal subunit protein uS15, found in Caldanaerobacter subterraneus subsp. tengcongensis (strain DSM 15242 / JCM 11007 / NBRC 100824 / MB4) (Thermoanaerobacter tengcongensis).